The primary structure comprises 260 residues: DNA repair protein RecO (260 aa).

This sequence belongs to the RecO family.

Involved in DNA repair and RecF pathway recombination. The chain is DNA repair protein RecO from Ligilactobacillus salivarius (strain UCC118) (Lactobacillus salivarius).